We begin with the raw amino-acid sequence, 57 residues long: Granulin-1 (57 aa).

2 cysteine pairs are disulfide-bonded: C4/C16 and C10/C26.

Belongs to the granulin family. Post-translationally, granulins are disulfide bridged. In terms of tissue distribution, ubiquitous.

It is found in the secreted. Granulins have possible cytokine-like activity. They may play a role in inflammation, wound repair, and tissue remodeling. This is Granulin-1 from Cyprinus carpio (Common carp).